The primary structure comprises 402 residues: CCA-adding enzyme (402 aa).

ATP-binding residues include Gly-32 and Arg-35. CTP contacts are provided by Gly-32 and Arg-35. 2 residues coordinate Mg(2+): Asp-45 and Asp-47. Residues Arg-116, Asp-159, Arg-162, Arg-165, and Arg-168 each coordinate ATP. Arg-116, Asp-159, Arg-162, Arg-165, and Arg-168 together coordinate CTP.

Belongs to the tRNA nucleotidyltransferase/poly(A) polymerase family. Bacterial CCA-adding enzyme type 3 subfamily. In terms of assembly, homodimer. Mg(2+) is required as a cofactor.

The catalysed reaction is a tRNA precursor + 2 CTP + ATP = a tRNA with a 3' CCA end + 3 diphosphate. It catalyses the reaction a tRNA with a 3' CCA end + 2 CTP + ATP = a tRNA with a 3' CCACCA end + 3 diphosphate. In terms of biological role, catalyzes the addition and repair of the essential 3'-terminal CCA sequence in tRNAs without using a nucleic acid template. Adds these three nucleotides in the order of C, C, and A to the tRNA nucleotide-73, using CTP and ATP as substrates and producing inorganic pyrophosphate. tRNA 3'-terminal CCA addition is required both for tRNA processing and repair. Also involved in tRNA surveillance by mediating tandem CCA addition to generate a CCACCA at the 3' terminus of unstable tRNAs. While stable tRNAs receive only 3'-terminal CCA, unstable tRNAs are marked with CCACCA and rapidly degraded. The protein is CCA-adding enzyme of Streptococcus pyogenes serotype M2 (strain MGAS10270).